The chain runs to 391 residues: Casein kinase II subunit alpha (391 aa).

The tract at residues 36 to 41 is interaction with beta subunit; the sequence is QDDYQL. A Protein kinase domain is found at 39 to 324; it reads YQLVRKLGRG…AREAMEHPYF (286 aa). Residues 45-53 and K68 contribute to the ATP site; that span reads LGRGKYSEV. D156 serves as the catalytic Proton acceptor. A phosphothreonine; by CDK1 mark is found at T344 and T360. Phosphoserine; by CDK1 is present on residues S362 and S370.

This sequence belongs to the protein kinase superfamily. Ser/Thr protein kinase family. CK2 subfamily. In terms of assembly, heterotetramer composed of two catalytic subunits (alpha chain and/or alpha' chain) and two regulatory subunits (beta chains). The tetramer can exist as a combination of 2 alpha/2 beta, 2 alpha'/2 beta or 1 alpha/1 alpha'/2 beta subunits. Also part of a CK2-SPT16-SSRP1 complex composed of SSRP1, SUPT16H, CSNK2A1, CSNK2A2 and CSNK2B, which forms following UV irradiation. Interacts with RNPS1. Interacts with SNAI1. Interacts with PML. Interacts with CCAR2. Interacts with HIRIP3. Phosphorylated at Thr-344, Thr-360, Ser-362 and Ser-370 by CDK1 in prophase and metaphase and dephosphorylated during anaphase. Phosphorylation does not directly affect casein kinase 2 activity, but may contribute to its regulation by forming binding sites for interacting proteins and/or targeting it to different compartments.

It is found in the nucleus. It carries out the reaction L-seryl-[protein] + ATP = O-phospho-L-seryl-[protein] + ADP + H(+). The enzyme catalyses L-threonyl-[protein] + ATP = O-phospho-L-threonyl-[protein] + ADP + H(+). Its activity is regulated as follows. Constitutively active protein kinase whose activity is not directly affected by phosphorylation. Seems to be regulated by level of expression and localization. Functionally, catalytic subunit of a constitutively active serine/threonine-protein kinase complex that phosphorylates a large number of substrates containing acidic residues C-terminal to the phosphorylated serine or threonine. Regulates numerous cellular processes, such as cell cycle progression, apoptosis and transcription, as well as viral infection. May act as a regulatory node which integrates and coordinates numerous signals leading to an appropriate cellular response. During mitosis, functions as a component of the p53/TP53-dependent spindle assembly checkpoint (SAC) that maintains cyclin-B-CDK1 activity and G2 arrest in response to spindle damage. Also required for p53/TP53-mediated apoptosis, phosphorylating 'Ser-392' of p53/TP53 following UV irradiation. Phosphorylates a number of DNA repair proteins in response to DNA damage, such as MDC1, MRE11, RAD9A, RAD51 and HTATSF1, promoting their recruitment to DNA damage sites. Can also negatively regulate apoptosis. Phosphorylates the caspases CASP9 and CASP2 and the apoptotic regulator NOL3. Phosphorylation protects CASP9 from cleavage and activation by CASP8, and inhibits the dimerization of CASP2 and activation of CASP8. Phosphorylates YY1, protecting YY1 from cleavage by CASP7 during apoptosis. Regulates transcription by direct phosphorylation of RNA polymerases I, II, III and IV. Also phosphorylates and regulates numerous transcription factors including NF-kappa-B, STAT1, CREB1, IRF1, IRF2, ATF1, ATF4, SRF, MAX, JUN, FOS, MYC and MYB. Phosphorylates Hsp90 and its co-chaperones FKBP4 and CDC37, which is essential for chaperone function. Mediates sequential phosphorylation of FNIP1, promoting its gradual interaction with Hsp90, leading to activate both kinase and non-kinase client proteins of Hsp90. Regulates Wnt signaling by phosphorylating CTNNB1 and the transcription factor LEF1. Acts as an ectokinase that phosphorylates several extracellular proteins. Phosphorylates PML at 'Ser-565' and primes it for ubiquitin-mediated degradation. Plays an important role in the circadian clock function by phosphorylating BMAL1 at 'Ser-90' which is pivotal for its interaction with CLOCK and which controls CLOCK nuclear entry. Phosphorylates FMR1, promoting FMR1-dependent formation of a membraneless compartment. May phosphorylate histone H2A on 'Ser-1'. The sequence is that of Casein kinase II subunit alpha (Csnk2a1) from Mus musculus (Mouse).